Here is a 158-residue protein sequence, read N- to C-terminus: NAD(P)H-quinone oxidoreductase subunit J, chloroplastic (158 aa).

The protein belongs to the complex I 30 kDa subunit family. In terms of assembly, NDH is composed of at least 16 different subunits, 5 of which are encoded in the nucleus.

Its subcellular location is the plastid. It localises to the chloroplast thylakoid membrane. It catalyses the reaction a plastoquinone + NADH + (n+1) H(+)(in) = a plastoquinol + NAD(+) + n H(+)(out). It carries out the reaction a plastoquinone + NADPH + (n+1) H(+)(in) = a plastoquinol + NADP(+) + n H(+)(out). Its function is as follows. NDH shuttles electrons from NAD(P)H:plastoquinone, via FMN and iron-sulfur (Fe-S) centers, to quinones in the photosynthetic chain and possibly in a chloroplast respiratory chain. The immediate electron acceptor for the enzyme in this species is believed to be plastoquinone. Couples the redox reaction to proton translocation, and thus conserves the redox energy in a proton gradient. In Vitis vinifera (Grape), this protein is NAD(P)H-quinone oxidoreductase subunit J, chloroplastic.